The primary structure comprises 409 residues: Glucan endo-1,6-beta-glucosidase B (409 aa).

An N-terminal signal peptide occupies residues Met-1–Ala-16. A glycan (N-linked (GlcNAc...) asparagine) is linked at Asn-35. Glu-228 (proton donor) is an active-site residue. Glu-330 acts as the Nucleophile in catalysis.

It belongs to the glycosyl hydrolase 5 (cellulase A) family.

Its subcellular location is the secreted. The catalysed reaction is Random hydrolysis of (1-&gt;6)-linkages in (1-&gt;6)-beta-D-glucans.. In terms of biological role, beta-glucanases participate in the metabolism of beta-glucan, the main structural component of the cell wall. Acts on lutean, pustulan and 1,6-oligo-beta-D-glucosides. The chain is Glucan endo-1,6-beta-glucosidase B (exgB) from Emericella nidulans (strain FGSC A4 / ATCC 38163 / CBS 112.46 / NRRL 194 / M139) (Aspergillus nidulans).